Here is a 307-residue protein sequence, read N- to C-terminus: Taste receptor type 2 member 10 (307 aa).

At 1–6 (MLRVVE) the chain is on the extracellular side. The chain crosses the membrane as a helical span at residues 7–27 (GIFIFVVVSESVFGVLGNGFI). Over 28-42 (GLVNCIDCAKNKLST) the chain is Cytoplasmic. The helical transmembrane segment at 43–63 (IGFILTGLAISRIFLIWIIIT) threads the bilayer. Over 64 to 100 (DGFIQIFSPNIYASGNLIEYISYFWVIGNQSSMWFAT) the chain is Extracellular. The N-linked (GlcNAc...) asparagine glycan is linked to asparagine 92. Residues 101-121 (SLSIFYFLKIANFSNYIFLWL) traverse the membrane as a helical segment. Residues 122–126 (KSRTN) are Cytoplasmic-facing. The chain crosses the membrane as a helical span at residues 127–147 (MVLPFMIVFLLISSLLNFAYI). Over 148-179 (AKILNDYKTKNDTVWDLNMYKSEYFIKQILLN) the chain is Extracellular. Asparagine 158 carries N-linked (GlcNAc...) asparagine glycosylation. The helical transmembrane segment at 180–200 (LGVIFFFTLSLITCIFLIISL) threads the bilayer. The Cytoplasmic segment spans residues 201–227 (WRHNRQMQSNVTGLRDSNTEAHVKAMK). The helical transmembrane segment at 228 to 248 (VLISFIILFILYFIGMAIEIS) threads the bilayer. Residues 249 to 257 (CFTVRENKL) are Extracellular-facing. The chain crosses the membrane as a helical span at residues 258 to 278 (LLMFGMTTTAIYPWGHSFILI). At 279 to 307 (LGNSKLKQASLRVLQQLKCCEKRKNLRVT) the chain is on the cytoplasmic side.

Belongs to the G-protein coupled receptor T2R family. As to expression, expressed in subsets of taste receptor cells of the tongue and palate epithelium and exclusively in gustducin-positive cells.

It is found in the membrane. In terms of biological role, gustducin-coupled strychnine receptor implicated in the perception of bitter compounds in the oral cavity and the gastrointestinal tract. Signals through PLCB2 and the calcium-regulated cation channel TRPM5. This chain is Taste receptor type 2 member 10 (TAS2R10), found in Homo sapiens (Human).